Reading from the N-terminus, the 374-residue chain is Peptide chain release factor 2 (374 aa).

Position 248 is an N5-methylglutamine (Gln-248).

Belongs to the prokaryotic/mitochondrial release factor family. In terms of processing, methylated by PrmC. Methylation increases the termination efficiency of RF2.

It is found in the cytoplasm. Functionally, peptide chain release factor 2 directs the termination of translation in response to the peptide chain termination codons UGA and UAA. The sequence is that of Peptide chain release factor 2 from Thermomicrobium roseum (strain ATCC 27502 / DSM 5159 / P-2).